Here is a 130-residue protein sequence, read N- to C-terminus: Small ribosomal subunit protein uS11c (130 aa).

The protein belongs to the universal ribosomal protein uS11 family. In terms of assembly, part of the 30S ribosomal subunit.

It localises to the plastid. Its subcellular location is the chloroplast. The sequence is that of Small ribosomal subunit protein uS11c from Pinus thunbergii (Japanese black pine).